A 208-amino-acid chain; its full sequence is Ubiquitin-conjugating enzyme E2 S (208 aa).

A UBC core domain is found at 14–160 (QTIRQVMKEL…ARMMTEIHAQ (147 aa)). The active-site Glycyl thioester intermediate is the C98. Residues 161-193 (PAKCGAGASDAKDDDGPSTKKHAGLDKKLQDKK) are disordered. Residues 170-193 (DAKDDDGPSTKKHAGLDKKLQDKK) are compositionally biased toward basic and acidic residues.

The protein belongs to the ubiquitin-conjugating enzyme family.

It carries out the reaction S-ubiquitinyl-[E1 ubiquitin-activating enzyme]-L-cysteine + [E2 ubiquitin-conjugating enzyme]-L-cysteine = [E1 ubiquitin-activating enzyme]-L-cysteine + S-ubiquitinyl-[E2 ubiquitin-conjugating enzyme]-L-cysteine.. It functions in the pathway protein modification; protein ubiquitination. Its function is as follows. Catalyzes the covalent attachment of ubiquitin to other proteins. Acts as an essential factor of the anaphase promoting complex/cyclosome (APC/C), a cell cycle-regulated ubiquitin ligase that controls progression through mitosis. Acts by specifically elongating polyubiquitin chains initiated by the E2 enzyme vih/UbcH10 on APC/C substrates, enhancing the degradation of APC/C substrates by the proteasome and promoting mitotic exit. This is Ubiquitin-conjugating enzyme E2 S from Drosophila virilis (Fruit fly).